A 394-amino-acid polypeptide reads, in one-letter code: Elongation factor Tu (394 aa).

Residues 10-204 (KPHVNIGTIG…AVDSYIPQPV (195 aa)) form the tr-type G domain. The interval 19-26 (GHVDHGKT) is G1. 19–26 (GHVDHGKT) serves as a coordination point for GTP. Residue Thr26 coordinates Mg(2+). The tract at residues 60–64 (GITIS) is G2. Residues 81–84 (DCPG) form a G3 region. GTP is bound by residues 81–85 (DCPGH) and 136–139 (NKVD). Residues 136 to 139 (NKVD) are G4. A G5 region spans residues 174 to 176 (SAL).

This sequence belongs to the TRAFAC class translation factor GTPase superfamily. Classic translation factor GTPase family. EF-Tu/EF-1A subfamily. Monomer.

It is found in the cytoplasm. The catalysed reaction is GTP + H2O = GDP + phosphate + H(+). Functionally, GTP hydrolase that promotes the GTP-dependent binding of aminoacyl-tRNA to the A-site of ribosomes during protein biosynthesis. This chain is Elongation factor Tu, found in Rickettsia montanensis.